The chain runs to 211 residues: Calcipressin-like protein (211 aa).

2 positions are modified to phosphoserine: S113 and S117. Position 182 is a phosphothreonine (T182).

Belongs to the RCAN family.

Functionally, inhibits calcineurin-dependent transcriptional responses by binding to the catalytic domain of calcineurin. In Saccharomyces cerevisiae (strain ATCC 204508 / S288c) (Baker's yeast), this protein is Calcipressin-like protein (RCN1).